Consider the following 50-residue polypeptide: Temporin-SHc (50 aa).

An N-terminal signal peptide occupies residues 1 to 10 (FLGTINLSLC). The propeptide occupies 11 to 35 (EQERDADEEERRDEPDGSNVEVEKR). F48 is modified (phenylalanine amide).

Expressed by the skin glands.

Its subcellular location is the secreted. The protein localises to the target cell membrane. Amphipathic alpha-helical antimicrobial peptide with potent activity against some Gram-positive bacteria (MIC=4-&gt;80 uM), potent activity against fungi (MIC=10-20 uM), and no activity against Gram-negative bacteria. Does not display anti-leishmania activity. Does not show hemolytic activity (LC(50)&gt;80 uM). This is Temporin-SHc from Pelophylax saharicus (Sahara frog).